Consider the following 201-residue polypeptide: Recombination protein RecR (201 aa).

Residues 57–74 (CRICGNITENSVNPCAIC) form a C4-type zinc finger. The Toprim domain maps to 82 to 178 (STVFVVENSR…KVTRLAHGLA (97 aa)).

Belongs to the RecR family.

May play a role in DNA repair. It seems to be involved in an RecBC-independent recombinational process of DNA repair. It may act with RecF and RecO. This chain is Recombination protein RecR, found in Leuconostoc citreum (strain KM20).